A 130-amino-acid chain; its full sequence is Histone H2A type 1 (130 aa).

The interval 1-22 (MSGRGKQGGKARAKAKSRSSRA) is disordered. Position 2 is an N-acetylserine (Ser-2). A Phosphoserine; by RPS6KA5 modification is found at Ser-2. A Citrulline; alternate modification is found at Arg-4. Residue Arg-4 is modified to Symmetric dimethylarginine; by PRMT5; alternate. Lys-6 bears the N6-(2-hydroxyisobutyryl)lysine mark. The segment covering 7–19 (QGGKARAKAKSRS) has biased composition (basic residues). Residue Lys-10 is modified to N6-(2-hydroxyisobutyryl)lysine; alternate. Lys-10 bears the N6-lactoyllysine; alternate mark. An N6-succinyllysine; alternate modification is found at Lys-10. Residues Lys-14 and Lys-16 each participate in a glycyl lysine isopeptide (Lys-Gly) (interchain with G-Cter in ubiquitin) cross-link. Lys-37 is subject to N6-(2-hydroxyisobutyryl)lysine; alternate. Lys-37 is modified (N6-(beta-hydroxybutyryl)lysine; alternate). Lys-37 is subject to N6-crotonyllysine; alternate. N6-(2-hydroxyisobutyryl)lysine is present on residues Lys-75 and Lys-76. N6-(2-hydroxyisobutyryl)lysine; alternate is present on Lys-96. An N6-succinyllysine; alternate modification is found at Lys-96. Lys-96 is subject to N6-glutaryllysine; alternate. The residue at position 100 (Lys-100) is an N6-glutaryllysine. The residue at position 105 (Gln-105) is an N5-methylglutamine. Residue Lys-119 is modified to N6-(2-hydroxyisobutyryl)lysine; alternate. 2 positions are modified to N6-crotonyllysine; alternate: Lys-119 and Lys-120. N6-glutaryllysine; alternate is present on residues Lys-119 and Lys-120. Lys-120 participates in a covalent cross-link: Glycyl lysine isopeptide (Lys-Gly) (interchain with G-Cter in ubiquitin); alternate. Thr-121 carries the phosphothreonine; by DCAF1 modification. N6-crotonyllysine; alternate is present on Lys-126. Residue Lys-126 is modified to N6-glutaryllysine; alternate.

The protein belongs to the histone H2A family. As to quaternary structure, the nucleosome is a histone octamer containing two molecules each of H2A, H2B, H3 and H4 assembled in one H3-H4 heterotetramer and two H2A-H2B heterodimers. The octamer wraps approximately 147 bp of DNA. Interacts with VRK1; the interaction is mediated by the nucleosome acidic patch, a cluster of negatively charged residues of H2A and H2B forming a cleft within the nucleosome core. In terms of processing, deiminated on Arg-4 in granulocytes upon calcium entry. Monoubiquitination of Lys-120 (H2AK119Ub) by RING1, TRIM37 and RNF2/RING2 complex gives a specific tag for epigenetic transcriptional repression and participates in X chromosome inactivation of female mammals. It is involved in the initiation of both imprinted and random X inactivation. Ubiquitinated H2A is enriched in inactive X chromosome chromatin. Ubiquitination of H2A functions downstream of methylation of 'Lys-27' of histone H3 (H3K27me). H2AK119Ub by RNF2/RING2 can also be induced by ultraviolet and may be involved in DNA repair. Following DNA double-strand breaks (DSBs), it is ubiquitinated through 'Lys-63' linkage of ubiquitin moieties by the E2 ligase UBE2N and the E3 ligases RNF8 and RNF168, leading to the recruitment of repair proteins to sites of DNA damage. Ubiquitination at Lys-14 and Lys-16 (H2AK13Ub and H2AK15Ub, respectively) in response to DNA damage is initiated by RNF168 that mediates monoubiquitination at these 2 sites, and 'Lys-63'-linked ubiquitin are then conjugated to monoubiquitin; RNF8 is able to extend 'Lys-63'-linked ubiquitin chains in vitro. H2AK119Ub and ionizing radiation-induced 'Lys-63'-linked ubiquitination (H2AK13Ub and H2AK15Ub) are distinct events. Post-translationally, phosphorylation on Ser-2 (H2AS1ph) is enhanced during mitosis. Phosphorylation on Ser-2 by RPS6KA5/MSK1 directly represses transcription. Acetylation of H3 inhibits Ser-2 phosphorylation by RPS6KA5/MSK1. Phosphorylation at Thr-121 (H2AT120ph) by DCAF1 is present in the regulatory region of many tumor suppresor genes and down-regulates their transcription. In terms of processing, symmetric dimethylation on Arg-4 by the PRDM1/PRMT5 complex may play a crucial role in the germ-cell lineage. Glutamine methylation at Gln-105 (H2AQ104me) by FBL is specifically dedicated to polymerase I. It is present at 35S ribosomal DNA locus and impairs binding of the FACT complex. Post-translationally, crotonylation (Kcr) is specifically present in male germ cells and marks testis-specific genes in post-meiotic cells, including X-linked genes that escape sex chromosome inactivation in haploid cells. Crotonylation marks active promoters and enhancers and confers resistance to transcriptional repressors. It is also associated with post-meiotically activated genes on autosomes. In terms of processing, lactylated in macrophages by EP300/P300 by using lactoyl-CoA directly derived from endogenous or exogenous lactate, leading to stimulates gene transcription.

It is found in the nucleus. It localises to the chromosome. Core component of nucleosome. Nucleosomes wrap and compact DNA into chromatin, limiting DNA accessibility to the cellular machineries which require DNA as a template. Histones thereby play a central role in transcription regulation, DNA repair, DNA replication and chromosomal stability. DNA accessibility is regulated via a complex set of post-translational modifications of histones, also called histone code, and nucleosome remodeling. This chain is Histone H2A type 1, found in Rattus norvegicus (Rat).